Reading from the N-terminus, the 397-residue chain is Protein irld-34 (397 aa).

The sequence is that of Protein irld-34 from Caenorhabditis elegans.